A 340-amino-acid polypeptide reads, in one-letter code: E3 ubiquitin ligase BIG BROTHER-related (340 aa).

Disordered regions lie at residues 1 to 56 (MPME…GVGE) and 133 to 182 (YDED…GNSD). Over residues 34–46 (NRQTGVVSDTGSG) the composition is skewed to polar residues. Composition is skewed to acidic residues over residues 133–164 (YDED…EDGL) and 173–182 (DDQEDDGNSD). Residues 288–329 (CVICRLDYEDDEDLILLPCKHSYHSECINNWLKINKVCPVCS) form an RING-type; atypical zinc finger.

In terms of processing, auto-ubiquitinated.

It catalyses the reaction S-ubiquitinyl-[E2 ubiquitin-conjugating enzyme]-L-cysteine + [acceptor protein]-L-lysine = [E2 ubiquitin-conjugating enzyme]-L-cysteine + N(6)-ubiquitinyl-[acceptor protein]-L-lysine.. It participates in protein modification; protein ubiquitination. Its function is as follows. E3 ubiquitin-ligase probably involved in organ size regulation. This Arabidopsis thaliana (Mouse-ear cress) protein is E3 ubiquitin ligase BIG BROTHER-related (BBR).